The primary structure comprises 87 residues: Putative septation protein SpoVG (87 aa).

It belongs to the SpoVG family.

In terms of biological role, could be involved in septation. The protein is Putative septation protein SpoVG of Agathobacter rectalis (strain ATCC 33656 / DSM 3377 / JCM 17463 / KCTC 5835 / VPI 0990) (Eubacterium rectale).